A 359-amino-acid polypeptide reads, in one-letter code: MQAATVVINRRALRHNLQRLRELAPASKMVAVVKANAYGHGLLETARTLPDADAFGVARLEEALRLRAGGITKPVLLLEGFFDARDLPTISAQHFHTAVHNEEQLAALEEASLDEPVTVWMKLDTGMHRLGVRPEQAEAFYHRLTQCKNVRQPVNIVSHFARADEPKCGATEKQLAIFNTFCEGKPGQRSIAASGGILLWPQSHFDWVRPGIILYGVSPLEDRSTGADFGCQPVMSLTSSLIAVREHKVGEPVGYGGTWISERDTRLGVVAMGYGDGYPRAAPSGTPVLVNGREVPIVGRVAMDMICVDLGPQAQDKAGDPVILWGEGLPVERIAEMTKVSAYELITRLTSRVAMKYVD.

Lys-34 (proton acceptor; specific for D-alanine) is an active-site residue. Position 34 is an N6-(pyridoxal phosphate)lysine (Lys-34). Arg-129 provides a ligand contact to substrate. The active-site Proton acceptor; specific for L-alanine is Tyr-255. Met-303 contacts substrate.

Belongs to the alanine racemase family. Pyridoxal 5'-phosphate is required as a cofactor.

It carries out the reaction L-alanine = D-alanine. The protein operates within amino-acid biosynthesis; D-alanine biosynthesis; D-alanine from L-alanine: step 1/1. Its pathway is cell wall biogenesis; peptidoglycan biosynthesis. In terms of biological role, catalyzes the interconversion of L-alanine and D-alanine. Provides the D-alanine required for cell wall biosynthesis. In Escherichia coli O157:H7, this protein is Alanine racemase, biosynthetic (alr).